The following is a 104-amino-acid chain: ATP-dependent Clp protease adapter protein ClpS (104 aa).

A disordered region spans residues 1-20 (MAEETPTRSPGGAAVLDKAP).

It belongs to the ClpS family. In terms of assembly, binds to the N-terminal domain of the chaperone ClpA.

Functionally, involved in the modulation of the specificity of the ClpAP-mediated ATP-dependent protein degradation. The protein is ATP-dependent Clp protease adapter protein ClpS of Synechococcus sp. (strain CC9902).